Consider the following 320-residue polypeptide: Na(+)-translocating NADH-quinone reductase subunit C (320 aa).

A helical transmembrane segment spans residues 16 to 36; sequence WYIVSFILGLSLFAGVLLSTI. At T285 the chain carries FMN phosphoryl threonine.

It belongs to the NqrC family. Composed of six subunits; NqrA, NqrB, NqrC, NqrD, NqrE and NqrF. The cofactor is FMN.

It localises to the cell inner membrane. It catalyses the reaction a ubiquinone + n Na(+)(in) + NADH + H(+) = a ubiquinol + n Na(+)(out) + NAD(+). Functionally, NQR complex catalyzes the reduction of ubiquinone-1 to ubiquinol by two successive reactions, coupled with the transport of Na(+) ions from the cytoplasm to the periplasm. NqrA to NqrE are probably involved in the second step, the conversion of ubisemiquinone to ubiquinol. This Chlamydia pneumoniae (Chlamydophila pneumoniae) protein is Na(+)-translocating NADH-quinone reductase subunit C.